The following is a 174-amino-acid chain: Alpha-crystallin B chain (174 aa).

Residue M1 is modified to N-acetylmethionine. The region spanning 55–163 (RMPSWLETGL…PERSIPITRE (109 aa)) is the sHSP domain. Residues H82, H103, E105, and H110 each coordinate Zn(2+). The tract at residues 148–174 (RKQSDVPERSIPITREEKPAIAGAQRK) is disordered. Residues 149-166 (KQSDVPERSIPITREEKP) are compositionally biased toward basic and acidic residues.

It belongs to the small heat shock protein (HSP20) family. As to quaternary structure, heteromer composed of three CRYAA and one CRYAB subunits. Aggregates with homologous proteins, including the small heat shock protein HSPB1, to form large heteromeric complexes. Inter-subunit bridging via zinc ions enhances stability, which is crucial as there is no protein turn over in the lens. In terms of tissue distribution, lens as well as other tissues.

May contribute to the transparency and refractive index of the lens. The chain is Alpha-crystallin B chain (CRYAB) from Anas platyrhynchos (Mallard).